Here is a 214-residue protein sequence, read N- to C-terminus: Outer-membrane lipoprotein carrier protein (214 aa).

An N-terminal signal peptide occupies residues 1–23 (MNKRITVLSLLLATSLSSAAAMA).

It belongs to the LolA family. In terms of assembly, monomer.

Its subcellular location is the periplasm. In terms of biological role, participates in the translocation of lipoproteins from the inner membrane to the outer membrane. Only forms a complex with a lipoprotein if the residue after the N-terminal Cys is not an aspartate (The Asp acts as a targeting signal to indicate that the lipoprotein should stay in the inner membrane). This is Outer-membrane lipoprotein carrier protein from Shewanella frigidimarina (strain NCIMB 400).